Here is a 383-residue protein sequence, read N- to C-terminus: Putative type I specificity subunit S.MgeORF438P (383 aa).

The segment at 1-142 is TRD1; that stretch reads MTPKLKLNNN…KELEIPFTSN (142 aa). The tract at residues 143 to 182 is conserved region 1; it reads KNEQHAIANTLSVFDERLENLASLIEINRKLRDEYAHKLF. A coiled-coil region spans residues 143–182; sequence KNEQHAIANTLSVFDERLENLASLIEINRKLRDEYAHKLF. A TRD2 region spans residues 183-330; sequence SLDEAFLSHW…GEIKVPYVKS (148 aa). Residues 331–370 are conserved region 2; it reads FQLQRKAGKIVFLLDQKLDQYKKELSSLTVIRDTLLKKLF. Positions 331-370 form a coiled coil; that stretch reads FQLQRKAGKIVFLLDQKLDQYKKELSSLTVIRDTLLKKLF.

This sequence belongs to the type-I restriction system S methylase family.

Its function is as follows. The specificity (S) subunit of a type I restriction enzyme; this subunit dictates DNA sequence specificity. This bacterium does not encode the associated endonuclease or methylase subunits. In Mycoplasma genitalium (strain ATCC 33530 / DSM 19775 / NCTC 10195 / G37) (Mycoplasmoides genitalium), this protein is Putative type I specificity subunit S.MgeORF438P.